We begin with the raw amino-acid sequence, 388 residues long: Protein kes1 (388 aa).

This sequence belongs to the OSBP family.

Its function is as follows. Lipid transporter involved in lipid countertransport between the Golgi complex and membranes of the endoplasmic reticulum: specifically exchanges sterol with phosphatidylinositol 4-phosphate (PI4P), delivering sterol to the Golgi in exchange for PI4P, which is degraded by the SAC1 phosphatase in the endoplasmic reticulum. This is Protein kes1 (kes1) from Schizosaccharomyces pombe (strain 972 / ATCC 24843) (Fission yeast).